The following is a 397-amino-acid chain: Urea transporter 2 (397 aa).

Helical transmembrane passes span 68-85 (VMFVNNPLSGILIVIGLF), 92-109 (AIAGCLGTVMSTLTALIL), 115-135 (AIASGLHGYNGVLVGLLIAVF), 143-163 (WWLLLPVIVMSMSCPILSSAL), and 172-192 (LPVFTLPFNIAVTLYLAATGH). The N-linked (GlcNAc...) asparagine glycan is linked to Asn-210. 5 helical membrane-spanning segments follow: residues 239-257 (WTGGIFLIALFISSPLICL), 264-280 (TMGMLAALTIATPFDSI), 287-303 (FNSTLACIAVGGMFYVI), 309-329 (LLAVACALFAAYVGAALTNVL), and 331-351 (VFGLPTCTWPFCISALIFLLL).

It belongs to the urea transporter family. Kidney.

It is found in the apical cell membrane. The protein localises to the basolateral cell membrane. The catalysed reaction is urea(in) = urea(out). Inhibited by urea analogs and phloretin. In terms of biological role, mediates the transport of urea driven by a concentration gradient across the cell membrane of the renal inner medullary collecting duct which is critical to the urinary concentrating mechanism. The chain is Urea transporter 2 (SLC14A2) from Oryctolagus cuniculus (Rabbit).